The chain runs to 92 residues: DNA-binding protein HU-alpha (92 aa).

It belongs to the bacterial histone-like protein family. In terms of assembly, heterodimer of an alpha and a beta chain.

Histone-like DNA-binding protein which is capable of wrapping DNA to stabilize it, and thus to prevent its denaturation under extreme environmental conditions. This chain is DNA-binding protein HU-alpha (hupA), found in Burkholderia pseudomallei (strain K96243).